A 255-amino-acid polypeptide reads, in one-letter code: Small ribosomal subunit protein eS1 (255 aa).

Over residues 1-18 (MAVGKNKRLSKGKKGLKK) the composition is skewed to basic residues. Residues 1 to 28 (MAVGKNKRLSKGKKGLKKRTQDPFSRKD) form a disordered region. The residue at position 2 (alanine 2) is an N-acetylalanine; partial. Over residues 19–28 (RTQDPFSRKD) the composition is skewed to basic and acidic residues.

The protein belongs to the eukaryotic ribosomal protein eS1 family. In terms of assembly, component of the small ribosomal subunit. Mature ribosomes consist of a small (40S) and a large (60S) subunit. The 40S subunit contains about 33 different proteins and 1 molecule of RNA (18S). The 60S subunit contains about 49 different proteins and 3 molecules of RNA (25S, 5.8S and 5S).

It is found in the cytoplasm. In Ajellomyces dermatitidis (strain ER-3 / ATCC MYA-2586) (Blastomyces dermatitidis), this protein is Small ribosomal subunit protein eS1.